A 262-amino-acid polypeptide reads, in one-letter code: Phosphatidylglycerol--prolipoprotein diacylglyceryl transferase (262 aa).

4 helical membrane-spanning segments follow: residues 17 to 37, 59 to 79, 94 to 114, and 121 to 141; these read FAIH…LLLG, LLFA…TLFY, IWEG…ALYW, and TTFF…LAFG. Arginine 142 is an a 1,2-diacyl-sn-glycero-3-phospho-(1'-sn-glycerol) binding site. The next 3 helical transmembrane spans lie at 176–196, 201–221, and 231–251; these read QIYQ…FYAG, VGQV…LAEY, and LLGL…FFGI.

Belongs to the Lgt family.

The protein resides in the cell inner membrane. The catalysed reaction is L-cysteinyl-[prolipoprotein] + a 1,2-diacyl-sn-glycero-3-phospho-(1'-sn-glycerol) = an S-1,2-diacyl-sn-glyceryl-L-cysteinyl-[prolipoprotein] + sn-glycerol 1-phosphate + H(+). The protein operates within protein modification; lipoprotein biosynthesis (diacylglyceryl transfer). In terms of biological role, catalyzes the transfer of the diacylglyceryl group from phosphatidylglycerol to the sulfhydryl group of the N-terminal cysteine of a prolipoprotein, the first step in the formation of mature lipoproteins. The protein is Phosphatidylglycerol--prolipoprotein diacylglyceryl transferase of Polynucleobacter necessarius subsp. necessarius (strain STIR1).